Reading from the N-terminus, the 131-residue chain is Global transcriptional regulator Spx (131 aa).

Residues cysteine 10 and cysteine 13 are joined by a disulfide bond.

It belongs to the ArsC family. Spx subfamily. In terms of assembly, interacts with the C-terminal domain of the alpha subunit of the RNAP.

The protein resides in the cytoplasm. In terms of biological role, global transcriptional regulator that plays a key role in stress response and exerts either positive or negative regulation of genes. Acts by interacting with the C-terminal domain of the alpha subunit of the RNA polymerase (RNAP). This interaction can enhance binding of RNAP to the promoter region of target genes and stimulate their transcription, or block interaction of RNAP with activator. This Shouchella clausii (strain KSM-K16) (Alkalihalobacillus clausii) protein is Global transcriptional regulator Spx.